A 349-amino-acid polypeptide reads, in one-letter code: Sesquiterpene synthase MAC_05714 (349 aa).

The Mg(2+) site is built by aspartate 91 and aspartate 96. A DDXXXD motif motif is present at residues 91–96 (DDLFVD). Substrate is bound at residue arginine 184. Mg(2+)-binding residues include asparagine 230, serine 234, and glutamate 238.

This sequence belongs to the terpene synthase family. Mg(2+) is required as a cofactor.

It catalyses the reaction (2E,6E)-farnesyl diphosphate + H2O = (+)-corvol ether B + diphosphate. The catalysed reaction is (2E,6E)-farnesyl diphosphate + H2O = (+)-corvol ether A + diphosphate. In terms of biological role, terpene synthase that catalyzes the conversion of (2E,6E)-farnesyl diphosphate (FPP) into sesquiterpenes which are important for fungi-environment interactions. Produces a mixture consisting of 8 sesquiterpenes including corvol ethers A and B, as well as traces of epizonarene, gamma-cadinene, delta-cadinene, alpha-cadinene, alpha-cadinol, and an unidentified sesquiterpene. Produces both corvol ether A and corvol ether B in similar concentrations. This Metarhizium acridum (strain CQMa 102) protein is Sesquiterpene synthase MAC_05714.